Consider the following 213-residue polypeptide: Large ribosomal subunit protein uL1 (213 aa).

Belongs to the universal ribosomal protein uL1 family. In terms of assembly, part of the 50S ribosomal subunit.

Binds directly to 23S rRNA. Probably involved in E site tRNA release. Its function is as follows. Protein L1 is also a translational repressor protein, it controls the translation of its operon by binding to its mRNA. This chain is Large ribosomal subunit protein uL1, found in Methanococcus maripaludis (strain C5 / ATCC BAA-1333).